The sequence spans 572 residues: Delta-1-pyrroline-5-carboxylate dehydrogenase, mitochondrial (572 aa).

Residue Gly300–Arg305 participates in NAD(+) binding. The active-site Proton acceptor is the Glu320. The active-site Nucleophile is the Cys354.

This sequence belongs to the aldehyde dehydrogenase family.

The protein localises to the mitochondrion matrix. It catalyses the reaction L-glutamate 5-semialdehyde + NAD(+) + H2O = L-glutamate + NADH + 2 H(+). It participates in amino-acid degradation; L-proline degradation into L-glutamate; L-glutamate from L-proline: step 2/2. The polypeptide is Delta-1-pyrroline-5-carboxylate dehydrogenase, mitochondrial (prnC) (Emericella nidulans (strain FGSC A4 / ATCC 38163 / CBS 112.46 / NRRL 194 / M139) (Aspergillus nidulans)).